A 382-amino-acid polypeptide reads, in one-letter code: Dodecanoyl-[acyl-carrier-protein] hydrolase, chloroplastic (382 aa).

Residues 1–83 constitute a chloroplast transit peptide; that stretch reads MATTSLASAF…FSAAEKQWTN (83 aa). Catalysis depends on residues asparagine 283, histidine 285, and cysteine 320.

The protein belongs to the acyl-ACP thioesterase family.

It localises to the plastid. The protein resides in the chloroplast. The enzyme catalyses dodecanoyl-[ACP] + H2O = dodecanoate + holo-[ACP] + H(+). Plays an essential role in chain termination during de novo fatty acid synthesis. High thioesterase activity for myristoyl-ACP. The polypeptide is Dodecanoyl-[acyl-carrier-protein] hydrolase, chloroplastic (Cinnamomum camphora (Camphor tree)).